The sequence spans 362 residues: Chorismate synthase (362 aa).

Arg-47 contributes to the NADP(+) binding site. FMN contacts are provided by residues Arg-124–Ser-126, Gly-286, Lys-301–Thr-305, and Arg-327.

The protein belongs to the chorismate synthase family. Homotetramer. FMNH2 is required as a cofactor.

The enzyme catalyses 5-O-(1-carboxyvinyl)-3-phosphoshikimate = chorismate + phosphate. Its pathway is metabolic intermediate biosynthesis; chorismate biosynthesis; chorismate from D-erythrose 4-phosphate and phosphoenolpyruvate: step 7/7. Its function is as follows. Catalyzes the anti-1,4-elimination of the C-3 phosphate and the C-6 proR hydrogen from 5-enolpyruvylshikimate-3-phosphate (EPSP) to yield chorismate, which is the branch point compound that serves as the starting substrate for the three terminal pathways of aromatic amino acid biosynthesis. This reaction introduces a second double bond into the aromatic ring system. In Nostoc punctiforme (strain ATCC 29133 / PCC 73102), this protein is Chorismate synthase.